We begin with the raw amino-acid sequence, 126 residues long: Mating-type protein A1 (126 aa).

The segment at residues Ser70–Lys126 is a DNA-binding region (homeobox).

This sequence belongs to the MATA1 family. In terms of assembly, binds DNA with a high specificity as a heterodimer of A1 and ALPHA2.

It is found in the nucleus. Functionally, mating type proteins are sequence specific DNA-binding proteins that act as master switches in yeast differentiation by controlling gene expression in a cell type-specific fashion. Transcriptional corepressor that, in a/alpha diploid cells, binds cooperatively with the ALPHA2 protein to a 21-bp DNA sequence termed the haploid-specific gene (hsg) operator, to repress transcription of haploid-specific genes and of MATALPHA1. The sequence is that of Mating-type protein A1 (MATA1) from Saccharomyces cerevisiae (Baker's yeast).